The chain runs to 466 residues: Cysteine--tRNA ligase (466 aa).

Residue cysteine 28 participates in Zn(2+) binding. The 'HIGH' region signature appears at 30–40 (PTVYNFFHIGN). 3 residues coordinate Zn(2+): cysteine 208, histidine 233, and glutamate 237. The 'KMSKS' region motif lies at 265 to 269 (KMSKS). Lysine 268 contributes to the ATP binding site.

This sequence belongs to the class-I aminoacyl-tRNA synthetase family. As to quaternary structure, monomer. Zn(2+) serves as cofactor.

The protein resides in the cytoplasm. The catalysed reaction is tRNA(Cys) + L-cysteine + ATP = L-cysteinyl-tRNA(Cys) + AMP + diphosphate. In Clostridium perfringens (strain SM101 / Type A), this protein is Cysteine--tRNA ligase.